Here is a 274-residue protein sequence, read N- to C-terminus: MPFRSNNPIMRDELLSRFFPQFHPVTTFNSGLSGGSFLIEHQGQRFVVRQPHDPDAPQSAFLRQYRALSQLPASIAPKPHLYLRDWMVVDYLPGAVKTYLPDTNELAGLLYYLHQQPRFGWRITLLPLLELYWQQSDPARRTVGWLRMLKRLRKAREPRPLRLSPLHMDVHAGNLVHSASGLKLIDWEYAGDGDIALELAAVWVENTEQHRQLVNDYATRAKIYPAQLWRQVRRWFPWLLMLKAGWFEYRWRQTGDQQFIRLADDTWRQLLIKQ.

This sequence belongs to the thiamine kinase family.

The enzyme catalyses thiamine + ATP = thiamine phosphate + ADP + H(+). It participates in cofactor biosynthesis; thiamine diphosphate biosynthesis; thiamine phosphate from thiamine: step 1/1. Its function is as follows. Catalyzes the ATP-dependent phosphorylation of thiamine to thiamine phosphate. Is involved in thiamine salvage. In Escherichia coli O139:H28 (strain E24377A / ETEC), this protein is Thiamine kinase.